The sequence spans 368 residues: Agmatine deiminase (368 aa).

Residue cysteine 357 is the Amidino-cysteine intermediate of the active site.

Belongs to the agmatine deiminase family. In terms of assembly, homodimer.

The enzyme catalyses agmatine + H2O = N-carbamoylputrescine + NH4(+). It functions in the pathway amine and polyamine biosynthesis; putrescine biosynthesis via agmatine pathway; N-carbamoylputrescine from agmatine: step 1/1. Its function is as follows. Mediates the hydrolysis of agmatine into N-carbamoylputrescine in the arginine decarboxylase (ADC) pathway of putrescine biosynthesis, a basic polyamine. This chain is Agmatine deiminase, found in Pseudomonas savastanoi pv. phaseolicola (strain 1448A / Race 6) (Pseudomonas syringae pv. phaseolicola (strain 1448A / Race 6)).